A 178-amino-acid chain; its full sequence is Ribosome maturation factor RimM (178 aa).

The PRC barrel domain occupies 103-177; it reads SKDEYYFFEI…KIVVKVPEWL (75 aa).

It belongs to the RimM family. As to quaternary structure, binds ribosomal protein uS19.

Its subcellular location is the cytoplasm. In terms of biological role, an accessory protein needed during the final step in the assembly of 30S ribosomal subunit, possibly for assembly of the head region. Essential for efficient processing of 16S rRNA. May be needed both before and after RbfA during the maturation of 16S rRNA. It has affinity for free ribosomal 30S subunits but not for 70S ribosomes. In Thermosipho africanus (strain TCF52B), this protein is Ribosome maturation factor RimM.